Here is a 207-residue protein sequence, read N- to C-terminus: Large ribosomal subunit protein uL4 (207 aa).

Positions 45-89 (RQGTHKVKTRSEVRGGGRKPWRQKGTGRARQGSIRSPQWRGGGTV) are disordered. Residues 60–71 (GGRKPWRQKGTG) are compositionally biased toward basic residues.

Belongs to the universal ribosomal protein uL4 family. Part of the 50S ribosomal subunit.

One of the primary rRNA binding proteins, this protein initially binds near the 5'-end of the 23S rRNA. It is important during the early stages of 50S assembly. It makes multiple contacts with different domains of the 23S rRNA in the assembled 50S subunit and ribosome. Its function is as follows. Forms part of the polypeptide exit tunnel. The protein is Large ribosomal subunit protein uL4 of Bacillus anthracis (strain A0248).